The chain runs to 217 residues: Protein-L-isoaspartate O-methyltransferase 2 (217 aa).

Ser-62 is an active-site residue.

This sequence belongs to the methyltransferase superfamily. L-isoaspartyl/D-aspartyl protein methyltransferase family.

Its subcellular location is the cytoplasm. The catalysed reaction is [protein]-L-isoaspartate + S-adenosyl-L-methionine = [protein]-L-isoaspartate alpha-methyl ester + S-adenosyl-L-homocysteine. In terms of biological role, catalyzes the methyl esterification of L-isoaspartyl residues in peptides and proteins that result from spontaneous decomposition of normal L-aspartyl and L-asparaginyl residues. It plays a role in the repair and/or degradation of damaged proteins. The protein is Protein-L-isoaspartate O-methyltransferase 2 of Geotalea uraniireducens (strain Rf4) (Geobacter uraniireducens).